The chain runs to 490 residues: GTPase Der (490 aa).

EngA-type G domains lie at 3-166 and 203-376; these read PVVA…MDDV and IKLA…DSST. GTP contacts are provided by residues 9-16, 56-60, 118-121, 209-216, 256-260, and 321-324; these read GRPNVGKS, DTGGI, NKTD, DTAGV, and NKWD. The region spanning 377 to 461 is the KH-like domain; that stretch reads RRVSTAMLTR…PIRIQFKEGE (85 aa).

This sequence belongs to the TRAFAC class TrmE-Era-EngA-EngB-Septin-like GTPase superfamily. EngA (Der) GTPase family. Associates with the 50S ribosomal subunit.

Its function is as follows. GTPase that plays an essential role in the late steps of ribosome biogenesis. The polypeptide is GTPase Der (Salmonella gallinarum (strain 287/91 / NCTC 13346)).